The primary structure comprises 381 residues: 1-deoxy-D-xylulose 5-phosphate reductoisomerase (381 aa).

NADPH is bound by residues Thr-10, Gly-11, Ser-12, Ile-13, Gly-36, Lys-37, Asn-38, and Asn-122. Residue Lys-123 participates in 1-deoxy-D-xylulose 5-phosphate binding. Glu-124 contributes to the NADPH binding site. Residue Asp-148 coordinates Mn(2+). Ser-149, Glu-150, Ser-173, and His-196 together coordinate 1-deoxy-D-xylulose 5-phosphate. Glu-150 serves as a coordination point for Mn(2+). Residue Gly-202 participates in NADPH binding. 1-deoxy-D-xylulose 5-phosphate is bound by residues Ser-209, Asn-214, Lys-215, and Glu-218. Residue Glu-218 participates in Mn(2+) binding.

The protein belongs to the DXR family. Mg(2+) is required as a cofactor. Mn(2+) serves as cofactor.

It catalyses the reaction 2-C-methyl-D-erythritol 4-phosphate + NADP(+) = 1-deoxy-D-xylulose 5-phosphate + NADPH + H(+). It participates in isoprenoid biosynthesis; isopentenyl diphosphate biosynthesis via DXP pathway; isopentenyl diphosphate from 1-deoxy-D-xylulose 5-phosphate: step 1/6. In terms of biological role, catalyzes the NADPH-dependent rearrangement and reduction of 1-deoxy-D-xylulose-5-phosphate (DXP) to 2-C-methyl-D-erythritol 4-phosphate (MEP). This chain is 1-deoxy-D-xylulose 5-phosphate reductoisomerase, found in Desulfitobacterium hafniense (strain DSM 10664 / DCB-2).